The chain runs to 492 residues: SH2 domain-containing adapter protein E (492 aa).

Disordered regions lie at residues 46-193, 214-236, 260-332, and 347-384; these read TASE…DKAK, KRTK…EPYD, LDGP…EQPW, and FEGS…KVDP. S103 is subject to Phosphoserine. Positions 149–158 are enriched in basic and acidic residues; the sequence is IKVDTQEKNG. Over residues 168 to 184 the composition is skewed to low complexity; it reads TSSSSSSSSSASSSPSS. Composition is skewed to basic and acidic residues over residues 214 to 227, 268 to 285, 306 to 332, 349 to 361, and 373 to 383; these read KRTK…RVGE, ETVK…KDLL, AEVK…EQPW, GSDR…DAGR, and LSDHGDGEKVD. In terms of domain architecture, SH2 spans 393 to 488; it reads WYHGSISRAE…AEHMTLLHPV (96 aa).

In terms of tissue distribution, expressed in heart, brain, lung and skeletal muscle.

This is SH2 domain-containing adapter protein E (She) from Mus musculus (Mouse).